We begin with the raw amino-acid sequence, 339 residues long: NADH-quinone oxidoreductase subunit H (339 aa).

The next 9 helical transmembrane spans lie at 9–29, 50–70, 82–102, 115–135, 161–181, 187–207, 235–255, 275–295, and 311–331; these read IFPLIIIALKVVAITIPLILC, PNVVGPFGLLQPIADAVKLLF, ILFILAPMITFILSLIGWAVI, VGVLYILAISSLSVYGIIIAG, MGLVIITVLLTTGTLNLSEII, MPWWIDLMLLPMGVVFFISVL, MGFALFFLGEYANMILVSAMT, IPGFFWFVFKVGFLLFCFLWI, and GWKVFLPLTLFWVVLVSSVLV.

Belongs to the complex I subunit 1 family. NDH-1 is composed of 14 different subunits. Subunits NuoA, H, J, K, L, M, N constitute the membrane sector of the complex.

The protein localises to the cell membrane. The enzyme catalyses a quinone + NADH + 5 H(+)(in) = a quinol + NAD(+) + 4 H(+)(out). Functionally, NDH-1 shuttles electrons from NADH, via FMN and iron-sulfur (Fe-S) centers, to quinones in the respiratory chain. The immediate electron acceptor for the enzyme in this species is believed to be ubiquinone. Couples the redox reaction to proton translocation (for every two electrons transferred, four hydrogen ions are translocated across the cytoplasmic membrane), and thus conserves the redox energy in a proton gradient. This subunit may bind ubiquinone. The chain is NADH-quinone oxidoreductase subunit H from Rickettsia africae (strain ESF-5).